We begin with the raw amino-acid sequence, 207 residues long: MPKLSLLKQDGTNAGEITLNDTVFGIEPNEKVVVDVILSQRASLRQGTHKVKNRSEVRGGGRKPWRQKGTGRARQGSIRSPQWRGGGVVFGPTPRSYAYKLPKKVRRLAIKSILSSKVNEEKLVVLEGLTFDAPKTKEFAAFLKNISVDTKALIVVAGESENVELSARNLQGITVIPAESISVLEVAKHDKLIITKAAVEKVEEVLA.

The disordered stretch occupies residues 47–78 (GTHKVKNRSEVRGGGRKPWRQKGTGRARQGSI). The span at 60–71 (GGRKPWRQKGTG) shows a compositional bias: basic residues.

The protein belongs to the universal ribosomal protein uL4 family. In terms of assembly, part of the 50S ribosomal subunit.

One of the primary rRNA binding proteins, this protein initially binds near the 5'-end of the 23S rRNA. It is important during the early stages of 50S assembly. It makes multiple contacts with different domains of the 23S rRNA in the assembled 50S subunit and ribosome. In terms of biological role, forms part of the polypeptide exit tunnel. The protein is Large ribosomal subunit protein uL4 of Listeria innocua serovar 6a (strain ATCC BAA-680 / CLIP 11262).